Reading from the N-terminus, the 2850-residue chain is Hornerin (2850 aa).

The S-100-like stretch occupies residues 1–81 (MPKLLQGVIT…TEYLLMIFKL (81 aa)). EF-hand domains are found at residues 13–48 (DVFY…LKNP) and 49–84 (NDPD…LVQA). Residues Thr-27, Glu-32, Asp-62, Asp-64, Asn-66, Lys-68, and Glu-73 each contribute to the Ca(2+) site. 13 repeat units span residues 97–187 (SGSK…SDSH), 188–278 (QSSG…SSSG), 279–369 (SSSS…SGSG), 370–460 (HSSS…SGSG), 474–566 (HSSG…YGSG), 593–683 (QSSG…SGSG), 685–747 (SSSN…SSSG), 748–836 (LSSS…SASG), 839–875 (SSQG…SASH), 876–965 (HASG…SRSG), 966–1004 (QSSR…SGSG), 1007–1097 (PSPS…ASSG), and 1098–1188 (QSSS…SGSG). Basic and acidic residues predominate over residues 100-110 (KLRDDTHQHQE). 2 disordered regions span residues 100–154 (KLRD…GTES) and 166–2817 (SGQH…KGGS). A compositionally biased stretch (polar residues) spans 125–144 (SSFSHSSWSAGENDSYSRNV). Composition is skewed to low complexity over residues 167–192 (GQHN…SSGR) and 226–248 (GQSS…SQHG). A compositionally biased stretch (gly residues) spans 249–259 (SGSGHSSGYGQ). Low complexity-rich tracts occupy residues 276-308 (SSGS…QSPS) and 317-421 (GHSS…SGSG). The span at 422–433 (QSPGHGQRGSGS) shows a compositional bias: gly residues. 2 stretches are compositionally biased toward low complexity: residues 449–465 (SSSS…SSGF) and 473–482 (EHSSGYTQHG). Over residues 483 to 493 (SGSGHSSGHGQ) the composition is skewed to gly residues. Composition is skewed to low complexity over residues 494 to 529 (HGSR…QSLG), 555 to 661 (SSSY…QSPS), 670 to 724 (GHSS…SHSS), 732 to 765 (RSGQ…SSGH), 782 to 806 (GSSS…SCGH), and 818 to 871 (GQHE…GQHE). Ser-659 and Ser-661 each carry phosphoserine. The span at 884–900 (GSGSGQSPGHGQRGSGS) shows a compositional bias: gly residues. Phosphoserine is present on Ser-890. 2 stretches are compositionally biased toward low complexity: residues 901–921 (GQSP…SSGR) and 931–996 (GFGH…SLGH). Phosphoserine is present on residues Ser-993 and Ser-1008. Low complexity-rich tracts occupy residues 1019 to 1050 (GQSS…SSGL) and 1057 to 1115 (SGQS…SSGY). The span at 1116-1132 (GRQGSGSGQSPGHGQRG) shows a compositional bias: gly residues. 2 stretches are compositionally biased toward low complexity: residues 1133-1156 (SGSR…SSGQ) and 1166-1184 (GFGH…SQHG). The span at 1185–1195 (SGSGHSSGYGQ) shows a compositional bias: gly residues. The residue at position 1205 (Arg-1205) is an Omega-N-methylarginine. Composition is skewed to low complexity over residues 1211 to 1232 (SSSG…SSGH) and 1253 to 1276 (GHSS…PYES). Repeat unit 14 spans residues 1215–1305 (SSSHYGQHGS…AYSQHGSGSG (91 aa)). Positions 1280-1301 (HSSVFGQHESGSGHSSAYSQHG) are enriched in polar residues. 5 stretches are compositionally biased toward low complexity: residues 1309–1322 (SQGQ…QSST), 1331–1349 (GQSS…SSGY), 1370–1390 (GHSS…SSGR), 1400–1438 (GFGH…GQSS), and 1445–1466 (SSSG…SLGH). A run of 16 repeats spans residues 1332-1422 (QSSS…SGSG), 1423-1474 (HSSS…SGSG), 1477-1567 (PSPS…ASSG), 1568-1658 (QSSS…SGSG), 1685-1775 (SSSR…SGSG), 1802-1892 (QSSS…SGSG), 1893-1944 (HSSS…SGSG), 1947-2037 (PSPS…ASSG), 2038-2128 (QSSS…SGSG), 2155-2245 (SSSR…SGSG), 2272-2362 (QSSS…SGSG), 2363-2414 (HSSS…SGSG), 2417-2507 (PSPS…ASSG), 2508-2598 (QSSS…SGSG), 2625-2715 (SSSH…SGSG), and 2716-2806 (HFCS…SGSG). 2 positions are modified to phosphoserine: Ser-1463 and Ser-1478. Composition is skewed to low complexity over residues 1489–1520 (GQSS…SSGL) and 1527–1585 (SGQS…SSGY). The segment covering 1586–1602 (GRQGSGSGQSPGHGQRG) has biased composition (gly residues). Low complexity-rich tracts occupy residues 1603-1626 (SGSR…SSGQ) and 1636-1654 (GFGH…SQHG). Over residues 1655–1665 (SGSGHSSGYGQ) the composition is skewed to gly residues. Positions 1682–1702 (SSRSSSRYGQHGSGSRQSSGH) are enriched in low complexity. Residues Ser-1712 and Ser-1714 each carry the phosphoserine modification. Over residues 1723–1746 (GHSSSHGQHGSGSGRSSSRGPYES) the composition is skewed to low complexity. The span at 1750–1771 (HSSVFGQHESGSGHSSAYSQHG) shows a compositional bias: polar residues. Low complexity-rich tracts occupy residues 1779–1831 (SQGQ…QSPS), 1840–1860 (GHSS…SSGR), and 1870–1936 (GFGH…SLGH). Ser-1829 and Ser-1831 each carry phosphoserine. Phosphoserine occurs at positions 1933 and 1948. Low complexity-rich tracts occupy residues 1959-1990 (GQSS…SSGL) and 1997-2055 (SGQS…SSGY). A compositionally biased stretch (gly residues) spans 2056–2072 (GRQGSGSGQSPGHGQRG). Composition is skewed to low complexity over residues 2073-2096 (SGSR…SSGQ) and 2106-2124 (GFGH…SQHG). Positions 2125-2135 (SGSGHSSGYGQ) are enriched in gly residues. Composition is skewed to low complexity over residues 2151–2172 (SSSG…SSGH) and 2193–2216 (GHSS…PYES). Polar residues predominate over residues 2220–2241 (HSSVFGQHESGSGHSSAYSQHG). Composition is skewed to low complexity over residues 2249–2301 (SQGQ…QSPS), 2310–2330 (GHSS…SSGR), 2340–2378 (GFGH…GQSS), and 2385–2406 (SSSG…SLGH). Phosphoserine occurs at positions 2299 and 2301. Phosphoserine is present on residues Ser-2403 and Ser-2418. Low complexity-rich tracts occupy residues 2429 to 2460 (GQSS…SSGL) and 2467 to 2525 (SGQS…SSGY). A compositionally biased stretch (gly residues) spans 2526 to 2542 (GRQGSGSGQSPGHGQRG). 2 stretches are compositionally biased toward low complexity: residues 2543 to 2566 (SGSR…SSGQ) and 2576 to 2594 (GFGH…SQHG). Gly residues predominate over residues 2595–2605 (SGSGHSSGYGQ). The span at 2621 to 2642 (SSSGSSSHYGQHGSGSRQSSGH) shows a compositional bias: low complexity. 2 positions are modified to phosphoserine: Ser-2652 and Ser-2654. Residues 2663–2682 (GHSSSHGQHGSGSGRSSSRG) show a composition bias toward low complexity. Residues 2698 to 2711 (ESGSGHSSAYSQHG) show a composition bias toward polar residues. Composition is skewed to low complexity over residues 2719-2732 (SQGQ…QSST), 2741-2759 (GQSS…SSGY), and 2795-2816 (SSGY…CKGG).

This sequence belongs to the S100-fused protein family. The protein in the N-terminal section; belongs to the S-100 family. In terms of processing, processed during the process of epidermal differentiation. Post-translationally, forms covalent cross-links mediated by transglutaminase TGM3, between glutamine and the epsilon-amino group of lysine residues (in vitro). As to expression, expressed in cornified epidermis, psoriatic and regenerating skin after wounding. Found in the upper granular layer and in the entire cornified layer of epidermis.

The protein localises to the cytoplasmic granule. Component of the epidermal cornified cell envelopes. This chain is Hornerin (HRNR), found in Homo sapiens (Human).